The sequence spans 316 residues: N-acetyl-gamma-glutamyl-phosphate reductase (316 aa).

Cys-136 is an active-site residue.

This sequence belongs to the NAGSA dehydrogenase family. Type 1 subfamily.

The protein localises to the cytoplasm. It catalyses the reaction N-acetyl-L-glutamate 5-semialdehyde + phosphate + NADP(+) = N-acetyl-L-glutamyl 5-phosphate + NADPH + H(+). It functions in the pathway amino-acid biosynthesis; L-arginine biosynthesis; N(2)-acetyl-L-ornithine from L-glutamate: step 3/4. Its function is as follows. Catalyzes the NADPH-dependent reduction of N-acetyl-5-glutamyl phosphate to yield N-acetyl-L-glutamate 5-semialdehyde. The chain is N-acetyl-gamma-glutamyl-phosphate reductase from Xanthomonas campestris pv. campestris (strain B100).